The chain runs to 1234 residues: ATP-dependent helicase/nuclease subunit A (1234 aa).

Positions 9 to 482 constitute a UvrD-like helicase ATP-binding domain; sequence STWTDDQWEA…IDLNKNFRSR (474 aa). ATP is bound at residue 30 to 37; that stretch reads AAAGSGKT. The region spanning 509-800 is the UvrD-like helicase C-terminal domain; it reads QAELKLGASY…RMMTIHSSKG (292 aa).

It belongs to the helicase family. AddA subfamily. In terms of assembly, heterodimer of AddA and AddB/RexB. The cofactor is Mg(2+).

The catalysed reaction is Couples ATP hydrolysis with the unwinding of duplex DNA by translocating in the 3'-5' direction.. It catalyses the reaction ATP + H2O = ADP + phosphate + H(+). Functionally, the heterodimer acts as both an ATP-dependent DNA helicase and an ATP-dependent, dual-direction single-stranded exonuclease. Recognizes the chi site generating a DNA molecule suitable for the initiation of homologous recombination. The AddA nuclease domain is required for chi fragment generation; this subunit has the helicase and 3' -&gt; 5' nuclease activities. The sequence is that of ATP-dependent helicase/nuclease subunit A from Bacillus pumilus (strain SAFR-032).